Consider the following 436-residue polypeptide: UPF0597 protein YhaM (436 aa).

Belongs to the UPF0597 family.

This chain is UPF0597 protein YhaM, found in Salmonella newport (strain SL254).